The primary structure comprises 850 residues: Protein translocase subunit SecA (850 aa).

Residues Q87, 105 to 109, and D494 each bind ATP; that span reads GEGKT. C834, C836, C845, and C846 together coordinate Zn(2+).

Belongs to the SecA family. As to quaternary structure, monomer and homodimer. Part of the essential Sec protein translocation apparatus which comprises SecA, SecYEG and auxiliary proteins SecDF-YajC and YidC. The cofactor is Zn(2+).

It localises to the cell inner membrane. Its subcellular location is the cytoplasm. It catalyses the reaction ATP + H2O + cellular proteinSide 1 = ADP + phosphate + cellular proteinSide 2.. Functionally, part of the Sec protein translocase complex. Interacts with the SecYEG preprotein conducting channel. Has a central role in coupling the hydrolysis of ATP to the transfer of proteins into and across the cell membrane, serving as an ATP-driven molecular motor driving the stepwise translocation of polypeptide chains across the membrane. In Desulfotalea psychrophila (strain LSv54 / DSM 12343), this protein is Protein translocase subunit SecA.